Here is a 1458-residue protein sequence, read N- to C-terminus: ATPase family AAA domain-containing protein 2B (1458 aa).

The disordered stretch occupies residues 1-155 (MVNTRKSSLR…LRGEKKGDGD (155 aa)). The residue at position 16 (S16) is a Phosphoserine. The segment covering 23–33 (PGAGAEPGATG) has biased composition (gly residues). Low complexity predominate over residues 34 to 58 (GSSHFISSRTRSSKTRAASCPAAKA). A phosphoserine mark is found at S79, S81, and S86. Over residues 99–115 (VCKDKSKSRSTGQREEW) the composition is skewed to basic and acidic residues. Residues 116–129 (NLSTGQARLTSQPG) are compositionally biased toward polar residues. Position 140 is a phosphoserine (S140). Residue T221 is modified to Phosphothreonine. The disordered stretch occupies residues 244-286 (NSYGIQNHHEVSTEGEEEESQEEDGDIEVEEAEGEENDRPYNL). The span at 256-279 (TEGEEEESQEEDGDIEVEEAEGEE) shows a compositional bias: acidic residues. S318 bears the Phosphoserine mark. The segment covering 321-332 (RRSHIRRKKHAI) has biased composition (basic residues). The segment at 321–353 (RRSHIRRKKHAIHSSDTTSSDEERFERRKSKSM) is disordered. Residue 441–448 (GPPGTGKT) participates in ATP binding. Position 939 is a phosphoserine (S939). A coiled-coil region spans residues 943–974 (QLSESEKSRMEDQEENTLRELRLFLRDVTKRL). The 116-residue stretch at 951–1066 (RMEDQEENTL…DTAHAIIAAE (116 aa)) folds into the Bromo domain. Disordered stretches follow at residues 1189–1208 (DCHEENGEETGDLSMTNDES), 1217–1257 (QGQR…EQTS), and 1309–1330 (LLEDQSKEKPETSTENHGDDLE). Residues 1240–1252 (NESLLVNSSSSLN) are compositionally biased toward low complexity. A phosphoserine mark is found at S1338 and S1347.

It belongs to the AAA ATPase family. As to quaternary structure, binds acetylated lysine residues in histone H1.4, H2A, H2B, H3 and H4 (in vitro).

The protein localises to the nucleus. The polypeptide is ATPase family AAA domain-containing protein 2B (ATAD2B) (Homo sapiens (Human)).